A 451-amino-acid polypeptide reads, in one-letter code: Uronate isomerase (451 aa).

This sequence belongs to the metallo-dependent hydrolases superfamily. Uronate isomerase family.

It carries out the reaction D-glucuronate = D-fructuronate. The catalysed reaction is aldehydo-D-galacturonate = keto-D-tagaturonate. It functions in the pathway carbohydrate metabolism; pentose and glucuronate interconversion. In Thermotoga sp. (strain RQ2), this protein is Uronate isomerase.